The sequence spans 457 residues: Nuclear hormone receptor family member nhr-20 (457 aa).

A DNA-binding region (nuclear receptor) is located at residues 16 to 92 (TSKCLVCEHP…AGMRRECVQK (77 aa)). 2 consecutive NR C4-type zinc fingers follow at residues 19–40 (CLVC…CLAC) and 56–80 (CKKD…FDKC). The interval 125–182 (GDQTDDNSPLSIEKKSPPGLLPNDSPMMADFKFDPSDIPSTSGGSTQRLERSPSPKLA) is disordered. Residues 162-171 (IPSTSGGSTQ) show a composition bias toward polar residues. The region spanning 201-457 (QLKNSMDRRR…DALSKSLLTL (257 aa)) is the NR LBD domain.

It belongs to the nuclear hormone receptor family.

It localises to the nucleus. Functionally, orphan nuclear receptor. The chain is Nuclear hormone receptor family member nhr-20 (nhr-20) from Caenorhabditis elegans.